We begin with the raw amino-acid sequence, 225 residues long: Peptidyl-tRNA hydrolase (225 aa).

Tyr14 lines the tRNA pocket. Residue His19 is the Proton acceptor of the active site. TRNA-binding residues include Phe64, Asn66, and Asn112. The interval 184-225 (ALRMQPPKPEKPKPAAKAPEAQAPEAAPDERSALQKLADRFR) is disordered. Residues 198-209 (AAKAPEAQAPEA) show a composition bias toward low complexity. Over residues 211 to 225 (PDERSALQKLADRFR) the composition is skewed to basic and acidic residues.

It belongs to the PTH family. In terms of assembly, monomer.

Its subcellular location is the cytoplasm. The enzyme catalyses an N-acyl-L-alpha-aminoacyl-tRNA + H2O = an N-acyl-L-amino acid + a tRNA + H(+). Its function is as follows. Hydrolyzes ribosome-free peptidyl-tRNAs (with 1 or more amino acids incorporated), which drop off the ribosome during protein synthesis, or as a result of ribosome stalling. In terms of biological role, catalyzes the release of premature peptidyl moieties from peptidyl-tRNA molecules trapped in stalled 50S ribosomal subunits, and thus maintains levels of free tRNAs and 50S ribosomes. This chain is Peptidyl-tRNA hydrolase, found in Cereibacter sphaeroides (strain ATCC 17023 / DSM 158 / JCM 6121 / CCUG 31486 / LMG 2827 / NBRC 12203 / NCIMB 8253 / ATH 2.4.1.) (Rhodobacter sphaeroides).